Here is a 71-residue protein sequence, read N- to C-terminus: Translation initiation factor IF-1 (71 aa).

An S1-like domain is found at methionine 1 to arginine 71.

The protein belongs to the IF-1 family. In terms of assembly, component of the 30S ribosomal translation pre-initiation complex which assembles on the 30S ribosome in the order IF-2 and IF-3, IF-1 and N-formylmethionyl-tRNA(fMet); mRNA recruitment can occur at any time during PIC assembly.

The protein resides in the cytoplasm. One of the essential components for the initiation of protein synthesis. Stabilizes the binding of IF-2 and IF-3 on the 30S subunit to which N-formylmethionyl-tRNA(fMet) subsequently binds. Helps modulate mRNA selection, yielding the 30S pre-initiation complex (PIC). Upon addition of the 50S ribosomal subunit IF-1, IF-2 and IF-3 are released leaving the mature 70S translation initiation complex. The polypeptide is Translation initiation factor IF-1 (Buchnera aphidicola subsp. Cinara cedri (strain Cc)).